We begin with the raw amino-acid sequence, 223 residues long: Cytidylate kinase (223 aa).

ATP is bound at residue 17–25 (GPTASGKGT).

It belongs to the cytidylate kinase family. Type 1 subfamily.

Its subcellular location is the cytoplasm. It carries out the reaction CMP + ATP = CDP + ADP. It catalyses the reaction dCMP + ATP = dCDP + ADP. This chain is Cytidylate kinase, found in Bordetella bronchiseptica (strain ATCC BAA-588 / NCTC 13252 / RB50) (Alcaligenes bronchisepticus).